Here is a 143-residue protein sequence, read N- to C-terminus: Transcription antitermination protein NusB (143 aa).

It belongs to the NusB family.

Involved in transcription antitermination. Required for transcription of ribosomal RNA (rRNA) genes. Binds specifically to the boxA antiterminator sequence of the ribosomal RNA (rrn) operons. The chain is Transcription antitermination protein NusB from Buchnera aphidicola subsp. Acyrthosiphon pisum (strain APS) (Acyrthosiphon pisum symbiotic bacterium).